We begin with the raw amino-acid sequence, 213 residues long: Probable 26S proteasome regulatory subunit p27 (213 aa).

Residues 1-82 (MDEFKQLDLK…IKKVLEKVFS (82 aa)) adopt a coiled-coil conformation. One can recognise a PDZ domain in the interval 120-184 (SKILGRVKPF…TLDVLLIRGY (65 aa)).

Its subcellular location is the cytoplasm. It localises to the nucleus. Acts as a chaperone during the assembly of the 26S proteasome, specifically of the base subcomplex of the 19S regulatory complex (RC). This is Probable 26S proteasome regulatory subunit p27 (nas2) from Schizosaccharomyces pombe (strain 972 / ATCC 24843) (Fission yeast).